Here is a 395-residue protein sequence, read N- to C-terminus: Isoafricanol synthase (395 aa).

Mg(2+) is bound by residues D95, N246, S250, and E254. Positions 346-357 (TEAVSGGRERPW) are enriched in basic and acidic residues. The interval 346-395 (TEAVSGGRERPWARLTGAEDLIRAGRGAPPPPGSGPDTRQPMPSEPSQLA) is disordered.

The protein belongs to the terpene synthase family. The cofactor is Mg(2+).

It carries out the reaction (2E,6E)-farnesyl diphosphate + H2O = (+)-isoafricanol + diphosphate. Catalyzes the cyclization of farnesyl diphosphate (FPP) to isoafricanol. This is Isoafricanol synthase from Streptomyces malaysiensis.